Reading from the N-terminus, the 419-residue chain is uncharacterized protein (419 aa).

The next 7 helical transmembrane spans lie at 16 to 36 (IMAK…LVVT), 186 to 206 (LVYI…SMIA), 235 to 255 (LLGI…AGSL), 283 to 303 (VIYA…LAAF), 318 to 338 (ITPM…GLNA), 340 to 360 (DAGF…IMFL), and 369 to 389 (FWQA…LAVI).

This sequence to M.jannaschii MJ1024.

The protein localises to the cell membrane. This is an uncharacterized protein from Bacillus subtilis (strain 168).